The chain runs to 465 residues: Protein dml1 (465 aa).

Ser-446 bears the Phosphoserine mark.

Belongs to the misato family.

It localises to the mitochondrion. Its function is as follows. Involved in the partitioning of the mitochondrial organelle and mitochondrial DNA (mtDNA) inheritance. This Schizosaccharomyces pombe (strain 972 / ATCC 24843) (Fission yeast) protein is Protein dml1 (dml1).